The following is a 162-amino-acid chain: MEIFIENIQDKIEITDEILELMEKAIKMCLEHEKFEYPYEVSIILTDNEKIREINYEQRNIDKPTDVLSFPIVDMYDGVIKSSQGDFDLDEGRIILGDILISMEKAKEQSMEYGHSFERELIFLLTHGVFHLLGYDHDTPEREKKMFEKQEAILKSLNLERN.

His127, His131, and His137 together coordinate Zn(2+).

This sequence belongs to the endoribonuclease YbeY family. Requires Zn(2+) as cofactor.

It is found in the cytoplasm. In terms of biological role, single strand-specific metallo-endoribonuclease involved in late-stage 70S ribosome quality control and in maturation of the 3' terminus of the 16S rRNA. The chain is Endoribonuclease YbeY from Acetivibrio thermocellus (strain ATCC 27405 / DSM 1237 / JCM 9322 / NBRC 103400 / NCIMB 10682 / NRRL B-4536 / VPI 7372) (Clostridium thermocellum).